We begin with the raw amino-acid sequence, 354 residues long: Holliday junction branch migration complex subunit RuvB (354 aa).

The large ATPase domain (RuvB-L) stretch occupies residues 4–198; the sequence is TTDYGASNTG…FGFTAHLDFY (195 aa). ATP is bound by residues leucine 37, arginine 38, glycine 79, lysine 82, threonine 83, threonine 84, 145-147, arginine 188, tyrosine 198, and arginine 235; that span reads EDF. Threonine 83 serves as a coordination point for Mg(2+). The interval 199–269 is small ATPAse domain (RuvB-S); sequence PHEELEKLIE…DVKEALALYQ (71 aa). Residues 272–354 form a head domain (RuvB-H) region; sequence SEGLDRLDIA…TPKDDVSKLF (83 aa). DNA contacts are provided by arginine 327 and arginine 332.

The protein belongs to the RuvB family. In terms of assembly, homohexamer. Forms an RuvA(8)-RuvB(12)-Holliday junction (HJ) complex. HJ DNA is sandwiched between 2 RuvA tetramers; dsDNA enters through RuvA and exits via RuvB. An RuvB hexamer assembles on each DNA strand where it exits the tetramer. Each RuvB hexamer is contacted by two RuvA subunits (via domain III) on 2 adjacent RuvB subunits; this complex drives branch migration. In the full resolvosome a probable DNA-RuvA(4)-RuvB(12)-RuvC(2) complex forms which resolves the HJ.

Its subcellular location is the cytoplasm. It catalyses the reaction ATP + H2O = ADP + phosphate + H(+). Functionally, the RuvA-RuvB-RuvC complex processes Holliday junction (HJ) DNA during genetic recombination and DNA repair, while the RuvA-RuvB complex plays an important role in the rescue of blocked DNA replication forks via replication fork reversal (RFR). RuvA specifically binds to HJ cruciform DNA, conferring on it an open structure. The RuvB hexamer acts as an ATP-dependent pump, pulling dsDNA into and through the RuvAB complex. RuvB forms 2 homohexamers on either side of HJ DNA bound by 1 or 2 RuvA tetramers; 4 subunits per hexamer contact DNA at a time. Coordinated motions by a converter formed by DNA-disengaged RuvB subunits stimulates ATP hydrolysis and nucleotide exchange. Immobilization of the converter enables RuvB to convert the ATP-contained energy into a lever motion, pulling 2 nucleotides of DNA out of the RuvA tetramer per ATP hydrolyzed, thus driving DNA branch migration. The RuvB motors rotate together with the DNA substrate, which together with the progressing nucleotide cycle form the mechanistic basis for DNA recombination by continuous HJ branch migration. Branch migration allows RuvC to scan DNA until it finds its consensus sequence, where it cleaves and resolves cruciform DNA. The polypeptide is Holliday junction branch migration complex subunit RuvB (Bifidobacterium longum (strain NCC 2705)).